Reading from the N-terminus, the 212-residue chain is Large ribosomal subunit protein uL3 (212 aa).

N5-methylglutamine is present on Q153.

This sequence belongs to the universal ribosomal protein uL3 family. In terms of assembly, part of the 50S ribosomal subunit. Forms a cluster with proteins L14 and L19. Methylated by PrmB.

In terms of biological role, one of the primary rRNA binding proteins, it binds directly near the 3'-end of the 23S rRNA, where it nucleates assembly of the 50S subunit. This is Large ribosomal subunit protein uL3 from Shewanella sediminis (strain HAW-EB3).